Here is a 103-residue protein sequence, read N- to C-terminus: Small ribosomal subunit protein uS10 (103 aa).

The protein belongs to the universal ribosomal protein uS10 family. In terms of assembly, part of the 30S ribosomal subunit.

Its function is as follows. Involved in the binding of tRNA to the ribosomes. The polypeptide is Small ribosomal subunit protein uS10 (Baumannia cicadellinicola subsp. Homalodisca coagulata).